Consider the following 165-residue polypeptide: RNA pyrophosphohydrolase (165 aa).

Residues 6-149 (GYRPNVGIII…KQSVYHQALT (144 aa)) form the Nudix hydrolase domain. A Nudix box motif is present at residues 38–59 (GGVRENETPQQAVFRELKEEVG).

It belongs to the Nudix hydrolase family. RppH subfamily. A divalent metal cation is required as a cofactor.

Its function is as follows. Accelerates the degradation of transcripts by removing pyrophosphate from the 5'-end of triphosphorylated RNA, leading to a more labile monophosphorylated state that can stimulate subsequent ribonuclease cleavage. The sequence is that of RNA pyrophosphohydrolase from Hydrogenovibrio crunogenus (strain DSM 25203 / XCL-2) (Thiomicrospira crunogena).